The sequence spans 447 residues: Na(+)-translocating NADH-quinone reductase subunit A (447 aa).

This sequence belongs to the NqrA family. In terms of assembly, composed of six subunits; NqrA, NqrB, NqrC, NqrD, NqrE and NqrF.

The enzyme catalyses a ubiquinone + n Na(+)(in) + NADH + H(+) = a ubiquinol + n Na(+)(out) + NAD(+). NQR complex catalyzes the reduction of ubiquinone-1 to ubiquinol by two successive reactions, coupled with the transport of Na(+) ions from the cytoplasm to the periplasm. NqrA to NqrE are probably involved in the second step, the conversion of ubisemiquinone to ubiquinol. This chain is Na(+)-translocating NADH-quinone reductase subunit A, found in Photorhabdus laumondii subsp. laumondii (strain DSM 15139 / CIP 105565 / TT01) (Photorhabdus luminescens subsp. laumondii).